We begin with the raw amino-acid sequence, 264 residues long: Glutamate racemase (264 aa).

Residues 10–11 (DS) and 42–43 (YG) each bind substrate. The Proton donor/acceptor role is filled by Cys73. Residue 74 to 75 (NT) coordinates substrate. Cys183 serves as the catalytic Proton donor/acceptor. Substrate is bound at residue 184–185 (TH).

The protein belongs to the aspartate/glutamate racemases family. In terms of assembly, homodimer.

The catalysed reaction is L-glutamate = D-glutamate. Its pathway is cell wall biogenesis; peptidoglycan biosynthesis. Provides the (R)-glutamate required for cell wall biosynthesis. The chain is Glutamate racemase from Streptococcus pyogenes serotype M1.